A 323-amino-acid polypeptide reads, in one-letter code: MAVFTAVTEAQLADWMRHYDLGEVVEFRGITSGIENSNFFLTTTRGEYVLTIFEKLTAQQLPFYLDLMRHLASHRVPVPDPMPRDDGALFGMLNGKPATIVTKLDGAPELAPGAAHCVEVGQMLARLHLAGRDFAHHQPNLRSLPWWQETVPSIAPFLSDARRTLLTEELAHQQAFFASADYASLPGGPCHCDLFRDNVLFAHAAPGTHHEVELGGFFDFYFAGCDKWLFDVAVTVNDWCVDLATGKLDEARVEAMLRAYQTVRPFTPAEARHWGDMLRAGAYRFWVSRLYDFHMPRAAELLKPHDPGHFERILRERLAGAAL.

Belongs to the pseudomonas-type ThrB family.

The catalysed reaction is L-homoserine + ATP = O-phospho-L-homoserine + ADP + H(+). It functions in the pathway amino-acid biosynthesis; L-threonine biosynthesis; L-threonine from L-aspartate: step 4/5. The chain is Homoserine kinase from Paraburkholderia phymatum (strain DSM 17167 / CIP 108236 / LMG 21445 / STM815) (Burkholderia phymatum).